The sequence spans 862 residues: MNNTTSDINDQRYEPREVEAYWQKEWANDDLYRTNTEVNKENTFYALSMFPYPSGSLHMGHVRNYVITDVLARYKRMKGLNVLHPMGWDSFGLPAENAAIERETSPSTWTDKNISQMKDQLDRLGLSIDWSKEVTTCKEDYYKWTQYIFNQLHKNNLAYQKKATVNWDPIDQTVLANEQVDAEGKSWRSGAKVEKKELNQWFLRITSFAEDLNKDLVTLNDWPDRVRVMQKNWIGKSIGAEITFDIKNSDQKITAFTTRIDTVYGVSYLVLASNHPLIDQLISSNDIDKLNDFRQTQEKLSDLERNSDTRQKLGMYLGVDAINPANNKEIPIWIGDYVIMEYGTGAVMGVPAHDSRDYQFAKSYDLPIQYVIKPNIGEDESYLNAEFVDKGVMINSDKFNGIESDIAKTKILEFGSNSNWAKPKITYKLRDWLISRQRYWGCPIPIINCKKCGQVRVPDDDLPVVLPIDIKLTGKGKSPLTTKTEWINTCCPKCGTDAKRETDTMDTFMCSSWYFLRYINPDNCEKPFLKSEIDKWLPVKQYVGGIEHAILHLLYSRFLTKALKRCGLINIDEPFKKLLTQGMVQAVTFKNPNTNKYFSKDQIKDIDNPKDPLTGENIEIIYEKMSKSKYNGVDPSVVIDKYGADTARMFILFKAPPEKDLEWDDSDVEGQYRFIQRLWKFVINTFKLTNNNSRSNIEKEKSKDEEALRLINIAIKEITDDLDNLQFNTAISELMKVVNGLSLIVNYCSNETLNKVISILVKITSPFSPHIAEELWKTIGNTQSIHLQSWPEFDAGAIEQDTFKLMIQINGKVRGSINASKNLSKENLEDLAIKTEAAIKWMDGKEPKRIIVVPNKLVNIVI.

Positions 51 to 61 (PYPSGSLHMGH) match the 'HIGH' region motif. The 'KMSKS' region motif lies at 624 to 628 (KMSKS). K627 is an ATP binding site.

It belongs to the class-I aminoacyl-tRNA synthetase family.

Its subcellular location is the cytoplasm. It carries out the reaction tRNA(Leu) + L-leucine + ATP = L-leucyl-tRNA(Leu) + AMP + diphosphate. The chain is Leucine--tRNA ligase from Prochlorococcus marinus (strain NATL1A).